The following is a 175-amino-acid chain: NAD(P)H-quinone oxidoreductase subunit I, chloroplastic (175 aa).

4Fe-4S ferredoxin-type domains lie at 55-84 and 95-124; these read GRIHFEFDKCIACEVCVRVCPINLPVVNWE and QTYSIDFGVCIFCGNCVEYCPTNCLSMTEE. [4Fe-4S] cluster is bound by residues Cys64, Cys67, Cys70, Cys74, Cys104, Cys107, Cys110, and Cys114.

This sequence belongs to the complex I 23 kDa subunit family. In terms of assembly, NDH is composed of at least 16 different subunits, 5 of which are encoded in the nucleus. The cofactor is [4Fe-4S] cluster.

It is found in the plastid. The protein localises to the chloroplast thylakoid membrane. The catalysed reaction is a plastoquinone + NADH + (n+1) H(+)(in) = a plastoquinol + NAD(+) + n H(+)(out). The enzyme catalyses a plastoquinone + NADPH + (n+1) H(+)(in) = a plastoquinol + NADP(+) + n H(+)(out). NDH shuttles electrons from NAD(P)H:plastoquinone, via FMN and iron-sulfur (Fe-S) centers, to quinones in the photosynthetic chain and possibly in a chloroplast respiratory chain. The immediate electron acceptor for the enzyme in this species is believed to be plastoquinone. Couples the redox reaction to proton translocation, and thus conserves the redox energy in a proton gradient. In Chlorokybus atmophyticus (Soil alga), this protein is NAD(P)H-quinone oxidoreductase subunit I, chloroplastic.